A 325-amino-acid chain; its full sequence is MLPTLTALLCLGLCLSQRINTEKQTLPKPIIWAKPSIMVTKGNSVNIWCQGAQSASEYQLYFEGSFFALERPKSSRSMNKVKFFISQMTSHTAGIYTCFYQSGELWSESSNPLKLVVTGLYDTPTLWVHPGPEVTLGENVTFSCHLKTATSKFFLLKERESNHIQHKYGNIQAEFPMGPVTRAHRGTYRCFGSYNDYAWSFPSEPVTLLITGEVENTSLAPTDPVSSLDYWEFDLSTKESGLQKDSAFWDHTAQNLIRIGLACIIVMALVWLLAEDWLSRRKDHEKLNRLTSWECRGRRRMHRYHEEEQRDAISMRELKATPGDM.

The N-terminal stretch at M1 to S16 is a signal peptide. Over Q17–R258 the chain is Extracellular. Ig-like domains follow at residues G42–Y100 and G137–G192. An intrachain disulfide couples C49 to C98. An N-linked (GlcNAc...) asparagine glycan is attached at N139. Cysteines 144 and 190 form a disulfide. Residue N216 is glycosylated (N-linked (GlcNAc...) asparagine). Residues I259–S279 form a helical membrane-spanning segment. Over R280–M325 the chain is Cytoplasmic.

It belongs to the natural cytotoxicity receptor (NCR) family. As to quaternary structure, interacts with CD3Z and FCER1G. As to expression, weakly expressed in spleen, heart and lung.

Its subcellular location is the cell membrane. Functionally, cytotoxicity-activating receptor that may contribute to the increased efficiency of activated natural killer (NK) cells to mediate tumor cell lysis. This chain is Natural cytotoxicity triggering receptor 1 (Ncr1), found in Rattus norvegicus (Rat).